The primary structure comprises 306 residues: Aspartate carbamoyltransferase catalytic subunit (306 aa).

Residues arginine 54 and threonine 55 each coordinate carbamoyl phosphate. Position 83 (lysine 83) interacts with L-aspartate. Carbamoyl phosphate contacts are provided by arginine 104, histidine 132, and glutamine 135. L-aspartate-binding residues include arginine 165 and arginine 227. The carbamoyl phosphate site is built by leucine 266 and proline 267.

Belongs to the aspartate/ornithine carbamoyltransferase superfamily. ATCase family. Heterododecamer (2C3:3R2) of six catalytic PyrB chains organized as two trimers (C3), and six regulatory PyrI chains organized as three dimers (R2).

The enzyme catalyses carbamoyl phosphate + L-aspartate = N-carbamoyl-L-aspartate + phosphate + H(+). It participates in pyrimidine metabolism; UMP biosynthesis via de novo pathway; (S)-dihydroorotate from bicarbonate: step 2/3. Functionally, catalyzes the condensation of carbamoyl phosphate and aspartate to form carbamoyl aspartate and inorganic phosphate, the committed step in the de novo pyrimidine nucleotide biosynthesis pathway. The polypeptide is Aspartate carbamoyltransferase catalytic subunit (Clostridium kluyveri (strain NBRC 12016)).